The following is a 117-amino-acid chain: Anti-adapter protein IraM (117 aa).

The protein belongs to the IraM/RssC family.

The protein localises to the cytoplasm. In terms of biological role, involved in the stabilization of the sigma stress factor RpoS. The chain is Anti-adapter protein IraM from Klebsiella pneumoniae (strain 342).